The chain runs to 389 residues: Mannitol-1-phosphate 5-dehydrogenase (389 aa).

5-16 (AVHFGAGNIGRG) lines the NAD(+) pocket. K215 is an active-site residue.

This sequence belongs to the mannitol dehydrogenase family. Monomer.

It carries out the reaction D-mannitol 1-phosphate + NAD(+) = beta-D-fructose 6-phosphate + NADH + H(+). In terms of biological role, catalyzes the NAD(H)-dependent interconversion of D-fructose 6-phosphate and D-mannitol 1-phosphate in the mannitol metabolic pathway. The protein is Mannitol-1-phosphate 5-dehydrogenase of Sclerotinia sclerotiorum (strain ATCC 18683 / 1980 / Ss-1) (White mold).